A 249-amino-acid polypeptide reads, in one-letter code: Serine 3-dehydrogenase (249 aa).

6 to 30 (LITGATSGFGQATARRFVKEGWKVI) lines the NADP(+) pocket. Position 135 (serine 135) interacts with substrate. Catalysis depends on tyrosine 148, which acts as the Proton acceptor.

It belongs to the short-chain dehydrogenases/reductases (SDR) family. In terms of assembly, homotetramer.

It carries out the reaction L-serine + NADP(+) = aminoacetaldehyde + CO2 + NADPH. Functionally, catalyzes the oxidation of the hydroxyl group of serine to form 2-aminomalonate semialdehyde which is spontaneously converted into 2-aminoacetaldehyde and CO(2). Also acts on D-serine, L-glycerate, D-glycerate and 2-methyl-DL-serine. Does not act on O-methyl-DL-serine and L-threonine. The chain is Serine 3-dehydrogenase (sdh) from Agrobacterium fabrum (strain C58 / ATCC 33970) (Agrobacterium tumefaciens (strain C58)).